A 581-amino-acid chain; its full sequence is Serine/threonine-protein kinase SSN3 (581 aa).

The segment at 34–57 is disordered; sequence LWSQQQQQQLLDTKGSASTSKSPM. Residues 48–57 show a composition bias toward polar residues; the sequence is GSASTSKSPM. The 391-residue stretch at 85–475 folds into the Protein kinase domain; it reads YEIIGYIAAG…AIDALEHEYF (391 aa). ATP-binding positions include 91 to 99 and K195; that span reads IAAGTYGKV. D298 serves as the catalytic Proton acceptor.

The protein belongs to the protein kinase superfamily. CMGC Ser/Thr protein kinase family. CDC2/CDKX subfamily. In terms of assembly, component of the SRB8-11 complex, a regulatory module of the Mediator complex. The cofactor is Mg(2+).

It localises to the nucleus. The enzyme catalyses L-seryl-[protein] + ATP = O-phospho-L-seryl-[protein] + ADP + H(+). The catalysed reaction is L-threonyl-[protein] + ATP = O-phospho-L-threonyl-[protein] + ADP + H(+). It catalyses the reaction [DNA-directed RNA polymerase] + ATP = phospho-[DNA-directed RNA polymerase] + ADP + H(+). Its function is as follows. Component of the SRB8-11 complex. The SRB8-11 complex is a regulatory module of the Mediator complex which is itself involved in regulation of basal and activated RNA polymerase II-dependent transcription. The SRB8-11 complex may be involved in the transcriptional repression of a subset of genes regulated by Mediator. It may inhibit the association of the Mediator complex with RNA polymerase II to form the holoenzyme complex. The SRB8-11 complex phosphorylates the C-terminal domain (CTD) of the largest subunit of RNA polymerase II. The chain is Serine/threonine-protein kinase SSN3 (SSN3) from Eremothecium gossypii (strain ATCC 10895 / CBS 109.51 / FGSC 9923 / NRRL Y-1056) (Yeast).